The chain runs to 108 residues: Translation initiation factor 1A (108 aa).

In terms of domain architecture, S1-like spans 11–85 (PSRDVPKPEE…NRCDILYKYG (75 aa)).

Belongs to the eIF-1A family.

Its function is as follows. Seems to be required for maximal rate of protein biosynthesis. Enhances ribosome dissociation into subunits and stabilizes the binding of the initiator Met-tRNA(I) to 40 S ribosomal subunits. The protein is Translation initiation factor 1A (eIF1A) of Saccharolobus islandicus (strain Y.N.15.51 / Yellowstone #2) (Sulfolobus islandicus).